The following is a 430-amino-acid chain: Trigger factor (430 aa).

A PPIase FKBP-type domain is found at 163–248 (GDTVVFDFAG…IHEIKAQELP (86 aa)).

Belongs to the FKBP-type PPIase family. Tig subfamily.

Its subcellular location is the cytoplasm. It catalyses the reaction [protein]-peptidylproline (omega=180) = [protein]-peptidylproline (omega=0). Functionally, involved in protein export. Acts as a chaperone by maintaining the newly synthesized protein in an open conformation. Functions as a peptidyl-prolyl cis-trans isomerase. This Exiguobacterium sibiricum (strain DSM 17290 / CCUG 55495 / CIP 109462 / JCM 13490 / 255-15) protein is Trigger factor.